The following is an 81-amino-acid chain: Photosystem I iron-sulfur center (81 aa).

4Fe-4S ferredoxin-type domains are found at residues 2 to 31 (SHSVKIYDTCIGCTQCVRACPTDVLEMIPW) and 39 to 68 (IASAPRTEDCVGCKRCESACPTDFLSVRVY). [4Fe-4S] cluster-binding residues include Cys-11, Cys-14, Cys-17, Cys-21, Cys-48, Cys-51, Cys-54, and Cys-58.

In terms of assembly, the eukaryotic PSI reaction center is composed of at least 11 subunits. It depends on [4Fe-4S] cluster as a cofactor.

The protein resides in the plastid thylakoid membrane. It carries out the reaction reduced [plastocyanin] + hnu + oxidized [2Fe-2S]-[ferredoxin] = oxidized [plastocyanin] + reduced [2Fe-2S]-[ferredoxin]. In terms of biological role, apoprotein for the two 4Fe-4S centers FA and FB of photosystem I (PSI); essential for photochemical activity. FB is the terminal electron acceptor of PSI, donating electrons to ferredoxin. The C-terminus interacts with PsaA/B/D and helps assemble the protein into the PSI complex. Required for binding of PsaD and PsaE to PSI. PSI is a plastocyanin-ferredoxin oxidoreductase, converting photonic excitation into a charge separation, which transfers an electron from the donor P700 chlorophyll pair to the spectroscopically characterized acceptors A0, A1, FX, FA and FB in turn. The chain is Photosystem I iron-sulfur center from Cuscuta gronovii (Common dodder).